The sequence spans 335 residues: Ornithine carbamoyltransferase (335 aa).

Residues 56-59 (STRT), Gln-83, Arg-107, and 134-137 (HPTQ) contribute to the carbamoyl phosphate site. Residues Asn-168, Asp-232, and 236-237 (SM) each bind L-ornithine. Carbamoyl phosphate is bound by residues 274 to 275 (CL) and Arg-320.

It belongs to the aspartate/ornithine carbamoyltransferase superfamily. OTCase family.

The protein localises to the cytoplasm. The enzyme catalyses carbamoyl phosphate + L-ornithine = L-citrulline + phosphate + H(+). Its pathway is amino-acid biosynthesis; L-arginine biosynthesis; L-arginine from L-ornithine and carbamoyl phosphate: step 1/3. Reversibly catalyzes the transfer of the carbamoyl group from carbamoyl phosphate (CP) to the N(epsilon) atom of ornithine (ORN) to produce L-citrulline. The polypeptide is Ornithine carbamoyltransferase (Yersinia pestis bv. Antiqua (strain Nepal516)).